Reading from the N-terminus, the 342-residue chain is 4-hydroxy-2-oxovalerate aldolase (342 aa).

Residues 8-260 (ITVHDMTLRD…ATGVDLFKMQ (253 aa)) form the Pyruvate carboxyltransferase domain. 16–17 (RD) is a binding site for substrate. Mn(2+) is bound at residue aspartate 17. Histidine 20 serves as the catalytic Proton acceptor. Substrate contacts are provided by serine 170 and histidine 199. 2 residues coordinate Mn(2+): histidine 199 and histidine 201. Tyrosine 290 serves as a coordination point for substrate.

This sequence belongs to the 4-hydroxy-2-oxovalerate aldolase family.

It carries out the reaction (S)-4-hydroxy-2-oxopentanoate = acetaldehyde + pyruvate. The polypeptide is 4-hydroxy-2-oxovalerate aldolase (Albidiferax ferrireducens (strain ATCC BAA-621 / DSM 15236 / T118) (Rhodoferax ferrireducens)).